Reading from the N-terminus, the 762-residue chain is 5-methyltetrahydropteroyltriglutamate--homocysteine methyltransferase (762 aa).

Residues 17 to 20 (REWK) and Lys-111 each bind 5-methyltetrahydropteroyltri-L-glutamate. L-homocysteine contacts are provided by residues 435-437 (IGS) and Glu-488. L-methionine contacts are provided by residues 435-437 (IGS) and Glu-488. 5-methyltetrahydropteroyltri-L-glutamate is bound by residues 519–520 (RC) and Trp-565. Asp-603 lines the L-homocysteine pocket. Asp-603 provides a ligand contact to L-methionine. A 5-methyltetrahydropteroyltri-L-glutamate-binding site is contributed by Glu-609. Residues His-645, Cys-647, and Glu-669 each contribute to the Zn(2+) site. Catalysis depends on His-698, which acts as the Proton donor. Cys-730 is a binding site for Zn(2+).

The protein belongs to the vitamin-B12 independent methionine synthase family. It depends on Zn(2+) as a cofactor.

It catalyses the reaction 5-methyltetrahydropteroyltri-L-glutamate + L-homocysteine = tetrahydropteroyltri-L-glutamate + L-methionine. It functions in the pathway amino-acid biosynthesis; L-methionine biosynthesis via de novo pathway; L-methionine from L-homocysteine (MetE route): step 1/1. In terms of biological role, catalyzes the transfer of a methyl group from 5-methyltetrahydrofolate to homocysteine resulting in methionine formation. This chain is 5-methyltetrahydropteroyltriglutamate--homocysteine methyltransferase, found in Bacillus cereus (strain ATCC 10987 / NRS 248).